Reading from the N-terminus, the 107-residue chain is Large ribosomal subunit protein uL24 (107 aa).

It belongs to the universal ribosomal protein uL24 family. In terms of assembly, part of the 50S ribosomal subunit.

In terms of biological role, one of two assembly initiator proteins, it binds directly to the 5'-end of the 23S rRNA, where it nucleates assembly of the 50S subunit. Functionally, one of the proteins that surrounds the polypeptide exit tunnel on the outside of the subunit. This is Large ribosomal subunit protein uL24 from Malacoplasma penetrans (strain HF-2) (Mycoplasma penetrans).